Reading from the N-terminus, the 540-residue chain is Flavin-dependent halogenase ptaM (540 aa).

The signal sequence occupies residues methionine 1–alanine 21. FAD-binding residues include glycine 14, alanine 17, and glutamate 47. N-linked (GlcNAc...) asparagine glycans are attached at residues asparagine 159, asparagine 192, asparagine 204, and asparagine 243. Chloride contacts are provided by serine 330 and glycine 331. Asparagine 480, asparagine 491, and asparagine 523 each carry an N-linked (GlcNAc...) asparagine glycan.

It belongs to the flavin-dependent halogenase family.

The protein operates within secondary metabolite biosynthesis. Functionally, flavin-dependent halogenase; part of the gene cluster that mediates the biosynthesis of pestheic acid, a diphenyl ether which is a biosynthetic precursor of the unique chloropupukeananes. The biosynthesis initiates from condensation of acetate and malonate units catalyzed by the non-reducing PKS ptaA. As the ptaA protein is TE/CLC domain-deficient, hydrolysis and Claisen cyclization of the polyketide could be catalyzed by ptaB containing a beta-lactamase domain. The ptaB protein might hydrolyze the thioester bond between the ACP of ptaA and the intermediate to release atrochrysone carboxylic acid, which is spontaneously dehydrated to form endocrocin anthrone. Endocrocin anthrone is then converted to endocrocin, catalyzed by the anthrone oxygenase ptaC. Spontaneous decarboxylation of endocrocin occurs to generate emodin. An O-methyltransferase (ptaH or ptaI) could methylate emodin to form physcion. PtaJ could then catalyze the oxidative cleavage of physcion, and rotation of the intermediate could then afford desmethylisosulochrin. PtaF, a putative NADH-dependent oxidoreductase, might also participate in the oxidative cleavage step. Desmethylisosulochrin is then transformed by another O-methyltransferase (ptaH or ptaI) to form isosulochrin. Chlorination of isosulochrin by ptaM in the cyclohexadienone B ring then produces chloroisosulochrin. PtaE is responsible for the oxidative coupling reactions of both benzophenones isosulochrin and chloroisosulochrin to RES-1214-1 and pestheic acid respectively, regardless of chlorination. This chain is Flavin-dependent halogenase ptaM, found in Pestalotiopsis fici (strain W106-1 / CGMCC3.15140).